The chain runs to 386 residues: Meiotic chromosome segregation protein C1539.02 (386 aa).

Disordered stretches follow at residues 1-28 (MNQD…SNKS), 46-85 (RALI…SSKQ), and 366-386 (DIHE…KTKG). Over residues 15-28 (AETSQLKNFSSNKS) the composition is skewed to polar residues.

Its subcellular location is the nucleus. Its function is as follows. Required for meiotic chromosome segregation. This Schizosaccharomyces pombe (strain 972 / ATCC 24843) (Fission yeast) protein is Meiotic chromosome segregation protein C1539.02.